Here is a 245-residue protein sequence, read N- to C-terminus: Thiamine phosphate phosphatase-like protein (245 aa).

Asp9 functions as the Nucleophile in the catalytic mechanism. Positions 9, 11, and 179 each coordinate Mg(2+). Residue Asp11 is the Proton donor of the active site.

This sequence belongs to the HAD-like hydrolase superfamily. Monomer. The cofactor is Mg(2+).

The catalysed reaction is thiamine phosphate + H2O = thiamine + phosphate. Its function is as follows. HAD-like hydrolase that has a thiamine monophosphate phosphatase activity in a heterologous system. Does not contribute to thiamine monophosphate phosphatase activity in planta. The polypeptide is Thiamine phosphate phosphatase-like protein (Arabidopsis thaliana (Mouse-ear cress)).